Consider the following 135-residue polypeptide: uncharacterized protein (135 aa).

Positions 8–123 constitute a HotDog ACOT-type domain; it reads PKGIIVLKTL…IFIYVAINKT (116 aa).

The protein belongs to the acyl coenzyme A hydrolase family.

This is an uncharacterized protein from Buchnera aphidicola subsp. Acyrthosiphon pisum (strain APS) (Acyrthosiphon pisum symbiotic bacterium).